Here is a 108-residue protein sequence, read N- to C-terminus: Transcription factor S (108 aa).

Zn(2+)-binding residues include Cys-5, Cys-8, Cys-21, Cys-24, Cys-69, Cys-72, Cys-97, and Cys-100. The C4-type zinc finger occupies 5 to 24 (CPKCNNLMLPKDGKLKCAVC). A TFIIS-type zinc finger spans residues 65 to 105 (TRIECPKCGHNEAYWWLQQTRCADEPETRFYKCKKCGHTWR).

Belongs to the archaeal RpoM/eukaryotic RPA12/RPB9/RPC11 RNA polymerase family.

Induces RNA cleavage activity in the RNA polymerase. In its presence, the cleavage activity of the RNA polymerase truncates the RNA back to position +15 in a stepwise manner by releasing mainly dinucleotides from the 3'-end of the nascent RNA. The truncated RNAs are able to continue elongation. Involved in transcriptional proofreading and fidelity. Misincorporation of nucleotides during elongation of transcription leads to arrested elongation complexes which are rescued by TFS-promoted removal of a dinucleotide from the 3'-end. TFS is able to induce a cleavage resynthesis cycle in stalled elongation complexes (resulting from the next missing nucleotide or a reduced incorporation rate of a wrong nucleotide) preventing misincorporation and enabling proofreading in a post-incorporation manner. Pausing of elongation complexes is the main determinant of TFS-induced RNA cleavage. In Methanocaldococcus jannaschii (strain ATCC 43067 / DSM 2661 / JAL-1 / JCM 10045 / NBRC 100440) (Methanococcus jannaschii), this protein is Transcription factor S.